The following is a 152-amino-acid chain: UPF0756 membrane protein Daud_1310 (152 aa).

4 helical membrane passes run 14 to 34, 51 to 71, 76 to 96, and 112 to 132; these read LVGV…LLFI, LELG…NGKI, IIYN…ALAT, and IIFG…GMPV.

The protein belongs to the UPF0756 family.

Its subcellular location is the cell membrane. The protein is UPF0756 membrane protein Daud_1310 of Desulforudis audaxviator (strain MP104C).